Reading from the N-terminus, the 253-residue chain is HTH-type transcriptional regulator AdiY (253 aa).

Residues 149–246 (DSVYQIIESD…GMTPLHYVSQ (98 aa)) form the HTH araC/xylS-type domain. 2 consecutive DNA-binding regions (H-T-H motif) follow at residues 166–187 (SMVASCLCLSPSLLKKKLKSEN) and 213–236 (ISQVSQSCGYNSTSYFISVFKDFY).

The polypeptide is HTH-type transcriptional regulator AdiY (adiY) (Escherichia coli (strain K12)).